A 702-amino-acid chain; its full sequence is Phosphoglycerol transferase I (702 aa).

The next 3 membrane-spanning stretches (helical) occupy residues 5 to 24 (LLVS…RLAW), 73 to 95 (GYIA…VRIR), and 102 to 124 (GGGA…SPLY).

This sequence belongs to the OpgB family.

It localises to the cell inner membrane. It carries out the reaction a phosphatidylglycerol + a membrane-derived-oligosaccharide D-glucose = a 1,2-diacyl-sn-glycerol + a membrane-derived-oligosaccharide 6-(glycerophospho)-D-glucose.. It functions in the pathway glycan metabolism; osmoregulated periplasmic glucan (OPG) biosynthesis. Its function is as follows. Transfers a phosphoglycerol residue from phosphatidylglycerol to the membrane-bound nascent glucan backbones. This Xanthomonas axonopodis pv. citri (strain 306) protein is Phosphoglycerol transferase I.